The following is a 269-amino-acid chain: 1-(5-phosphoribosyl)-5-[(5-phosphoribosylamino)methylideneamino] imidazole-4-carboxamide isomerase (269 aa).

Asp10 functions as the Proton acceptor in the catalytic mechanism. The active-site Proton donor is Asp132.

Belongs to the HisA/HisF family.

It localises to the cytoplasm. It carries out the reaction 1-(5-phospho-beta-D-ribosyl)-5-[(5-phospho-beta-D-ribosylamino)methylideneamino]imidazole-4-carboxamide = 5-[(5-phospho-1-deoxy-D-ribulos-1-ylimino)methylamino]-1-(5-phospho-beta-D-ribosyl)imidazole-4-carboxamide. It functions in the pathway amino-acid biosynthesis; L-histidine biosynthesis; L-histidine from 5-phospho-alpha-D-ribose 1-diphosphate: step 4/9. This Xylella fastidiosa (strain Temecula1 / ATCC 700964) protein is 1-(5-phosphoribosyl)-5-[(5-phosphoribosylamino)methylideneamino] imidazole-4-carboxamide isomerase.